The primary structure comprises 685 residues: ATP-dependent permease MDL1 (685 aa).

A compositionally biased stretch (polar residues) spans 48–70; the sequence is FNSKSSTAPNTEANSNGSTNSQS. The tract at residues 48–76 is disordered; that stretch reads FNSKSSTAPNTEANSNGSTNSQSDTKKPR. Asn63 carries an N-linked (GlcNAc...) asparagine glycan. A helical transmembrane segment spans residues 96 to 116; the sequence is LIFFALICLVTTSATSMALPL. Residues 97–407 enclose the ABC transmembrane type-1 domain; sequence IFFALICLVT…LGNFYTELMK (311 aa). Residues 125 to 147 form a disordered region; that stretch reads TKKDDDDDKDNDNDDKDDTQPSD. The segment covering 129 to 141 has biased composition (acidic residues); the sequence is DDDDKDNDNDDKD. A helical membrane pass occupies residues 158 to 180; sequence FYSALGVLFIVSASTNFGRIYLL. Residue Asn239 is glycosylated (N-linked (GlcNAc...) asparagine). A helical membrane pass occupies residues 266 to 282; it reads LCMSLIFPPLITMSWFY. Asn336 is a glycosylation site (N-linked (GlcNAc...) asparagine). 2 helical membrane passes run 353 to 373 and 381 to 401; these read GFIG…LIGA and LSSF…LGNF. One can recognise an ABC transporter domain in the interval 440–680; it reads IEFKGIDFTY…PNSQFNKLLK (241 aa). Residue 475 to 482 participates in ATP binding; it reads GPSGSGKS. Asn553 and Asn576 each carry an N-linked (GlcNAc...) asparagine glycan.

It belongs to the ABC transporter superfamily. ABCB family. Mitochondrial peptide exporter (TC 3.A.1.212) subfamily.

It is found in the membrane. This Candida albicans (Yeast) protein is ATP-dependent permease MDL1 (MDL1).